The primary structure comprises 217 residues: Small ribosomal subunit protein uS3c (217 aa).

The 75-residue stretch at 43–117 (IKNYVQKNRK…KLNIAITRIA (75 aa)) folds into the KH type-2 domain.

The protein belongs to the universal ribosomal protein uS3 family. As to quaternary structure, part of the 30S ribosomal subunit.

Its subcellular location is the plastid. The protein resides in the chloroplast. The protein is Small ribosomal subunit protein uS3c (rps3) of Ranunculus macranthus (Large buttercup).